Consider the following 380-residue polypeptide: L-lactate dehydrogenase (380 aa).

Residues 1–380 form the FMN hydroxy acid dehydrogenase domain; that stretch reads MIISSPNDYR…TRDSLVGLPR (380 aa). Tyr-24 serves as a coordination point for substrate. The FMN site is built by Ser-106 and Gln-127. Tyr-129 is a substrate binding site. Position 155 (Thr-155) interacts with FMN. Arg-164 provides a ligand contact to substrate. Position 251 (Lys-251) interacts with FMN. His-275 acts as the Proton acceptor in catalysis. Arg-278 contacts substrate. 306 to 330 lines the FMN pocket; the sequence is DSGIRTGLDVVRMLALGAKGVLLGR.

Belongs to the FMN-dependent alpha-hydroxy acid dehydrogenase family. The cofactor is FMN.

The protein resides in the cell inner membrane. The catalysed reaction is (S)-lactate + A = pyruvate + AH2. Catalyzes the conversion of L-lactate to pyruvate. Is coupled to the respiratory chain. The polypeptide is L-lactate dehydrogenase (Azorhizobium caulinodans (strain ATCC 43989 / DSM 5975 / JCM 20966 / LMG 6465 / NBRC 14845 / NCIMB 13405 / ORS 571)).